Reading from the N-terminus, the 292-residue chain is Sulfofructosephosphate aldolase (292 aa).

Lysine 193 acts as the Schiff-base intermediate with substrate in catalysis.

This sequence belongs to the aldolase LacD family. Homotetramer.

It catalyses the reaction 6-deoxy-6-sulfo-D-fructose 1-phosphate = (2S)-3-sulfolactaldehyde + dihydroxyacetone phosphate. In terms of biological role, cleaves 6-deoxy-6-sulfo-D-fructose 1-phosphate (SFP) to form dihydroxyacetone phosphate (DHAP) and 3-sulfolactaldehyde (SLA). This is Sulfofructosephosphate aldolase (yihT) from Escherichia coli (strain K12).